The chain runs to 187 residues: Protein TIFY 11b (187 aa).

The Tify domain occupies 68–103; it reads ATAPAAPLTIFYGGRMVVFEDFPADKAAEVMRMASS. Positions 121–145 match the Jas motif; sequence PIMRKASLQRFFAKRKDRLAATTPY. A Nuclear localization signal motif is present at residues 123 to 130; the sequence is MRKASLQR. The segment at 139–168 is disordered; that stretch reads LAATTPYARPSPAETKASEPEEKKTPTSWL. A compositionally biased stretch (basic and acidic residues) spans 154-163; sequence KASEPEEKKT.

Belongs to the TIFY/JAZ family. In terms of assembly, interacts with COI1B in a coronatine-dependent manner. Coronatine is an analog of jasmonoyl isoleucine (JA-Ile). Post-translationally, ubiquitinated. Targeted for degradation by the SCF(COI1) E3 ubiquitin ligase-proteasome pathway during jasmonate signaling.

It localises to the nucleus. Repressor of jasmonate responses. This is Protein TIFY 11b from Oryza sativa subsp. japonica (Rice).